Reading from the N-terminus, the 269-residue chain is Hydroxyethylthiazole kinase (269 aa).

Met-45 provides a ligand contact to substrate. Positions 121 and 167 each coordinate ATP. Gly-194 contributes to the substrate binding site.

Belongs to the Thz kinase family. Mg(2+) is required as a cofactor.

The enzyme catalyses 5-(2-hydroxyethyl)-4-methylthiazole + ATP = 4-methyl-5-(2-phosphooxyethyl)-thiazole + ADP + H(+). Its pathway is cofactor biosynthesis; thiamine diphosphate biosynthesis; 4-methyl-5-(2-phosphoethyl)-thiazole from 5-(2-hydroxyethyl)-4-methylthiazole: step 1/1. In terms of biological role, catalyzes the phosphorylation of the hydroxyl group of 4-methyl-5-beta-hydroxyethylthiazole (THZ). This is Hydroxyethylthiazole kinase from Bacillus cytotoxicus (strain DSM 22905 / CIP 110041 / 391-98 / NVH 391-98).